Consider the following 322-residue polypeptide: Quinolinate synthase (322 aa).

The iminosuccinate site is built by H36 and S53. Residue C98 coordinates [4Fe-4S] cluster. Iminosuccinate-binding positions include 124–126 (YIN) and S141. Residue C184 coordinates [4Fe-4S] cluster. Iminosuccinate-binding positions include 210–212 (HPE) and T227. Residue C278 coordinates [4Fe-4S] cluster.

It belongs to the quinolinate synthase family. Type 2 subfamily. [4Fe-4S] cluster serves as cofactor.

It localises to the cytoplasm. The catalysed reaction is iminosuccinate + dihydroxyacetone phosphate = quinolinate + phosphate + 2 H2O + H(+). The protein operates within cofactor biosynthesis; NAD(+) biosynthesis; quinolinate from iminoaspartate: step 1/1. Functionally, catalyzes the condensation of iminoaspartate with dihydroxyacetone phosphate to form quinolinate. This is Quinolinate synthase from Chloroherpeton thalassium (strain ATCC 35110 / GB-78).